The primary structure comprises 322 residues: Uracil-DNA glycosylase (322 aa).

Catalysis depends on aspartate 142, which acts as the Proton acceptor.

The protein belongs to the uracil-DNA glycosylase (UDG) superfamily. UNG family.

It localises to the mitochondrion. The protein resides in the nucleus. The enzyme catalyses Hydrolyzes single-stranded DNA or mismatched double-stranded DNA and polynucleotides, releasing free uracil.. Excises uracil residues from the DNA which can arise as a result of misincorporation of dUMP residues by DNA polymerase or due to deamination of cytosine. This chain is Uracil-DNA glycosylase (ung1), found in Schizosaccharomyces pombe (strain 972 / ATCC 24843) (Fission yeast).